The following is a 134-amino-acid chain: UPF0357 protein YCL012C (134 aa).

The signal sequence occupies residues 1 to 23 (MKSLFYLKLLLWVVLLSLCLLMA). A phosphoserine mark is found at Ser71 and Ser74. Lys86 participates in a covalent cross-link: Glycyl lysine isopeptide (Lys-Gly) (interchain with G-Cter in ubiquitin).

The protein belongs to the UPF0357 family.

This is UPF0357 protein YCL012C from Saccharomyces cerevisiae (strain ATCC 204508 / S288c) (Baker's yeast).